The chain runs to 376 residues: Dihydroorotate dehydrogenase (quinone) (376 aa).

FMN contacts are provided by residues 78 to 82 and threonine 102; that span reads AGFDK. Lysine 82 provides a ligand contact to substrate. A substrate-binding site is contributed by 127 to 131; that stretch reads NRMGF. Positions 157 and 190 each coordinate FMN. Asparagine 190 lines the substrate pocket. The Nucleophile role is filled by serine 193. Substrate is bound at residue asparagine 195. Positions 228 and 256 each coordinate FMN. Residue 257-258 participates in substrate binding; it reads NT. FMN is bound by residues glycine 286, glycine 315, and 336 to 337; that span reads YT.

It belongs to the dihydroorotate dehydrogenase family. Type 2 subfamily. In terms of assembly, monomer. It depends on FMN as a cofactor.

It is found in the cell membrane. It catalyses the reaction (S)-dihydroorotate + a quinone = orotate + a quinol. It functions in the pathway pyrimidine metabolism; UMP biosynthesis via de novo pathway; orotate from (S)-dihydroorotate (quinone route): step 1/1. Functionally, catalyzes the conversion of dihydroorotate to orotate with quinone as electron acceptor. This chain is Dihydroorotate dehydrogenase (quinone), found in Nostoc sp. (strain PCC 7120 / SAG 25.82 / UTEX 2576).